A 221-amino-acid chain; its full sequence is Protein-L-isoaspartate O-methyltransferase (221 aa).

Residue Ser-64 is part of the active site.

It belongs to the methyltransferase superfamily. L-isoaspartyl/D-aspartyl protein methyltransferase family.

It localises to the cytoplasm. The catalysed reaction is [protein]-L-isoaspartate + S-adenosyl-L-methionine = [protein]-L-isoaspartate alpha-methyl ester + S-adenosyl-L-homocysteine. Catalyzes the methyl esterification of L-isoaspartyl residues in peptides and proteins that result from spontaneous decomposition of normal L-aspartyl and L-asparaginyl residues. It plays a role in the repair and/or degradation of damaged proteins. The sequence is that of Protein-L-isoaspartate O-methyltransferase from Cytophaga hutchinsonii (strain ATCC 33406 / DSM 1761 / CIP 103989 / NBRC 15051 / NCIMB 9469 / D465).